The sequence spans 419 residues: MGMTMTQKILAAHAGLESVKAGQLIEVNLDLVLGNDITTPVAINEFKKFGVDKVFNKSQIAIVPDHFTPNKDIKAAEQVKYVREFSNKMGIENFFEVGEMGIEHCLLPEKGLVVAGDVVIGADSHTCTYGALGAFSTGIGSTDMAAGMATGQTWFKVPSAIKFILKNKPAKWVSGKDIILHIIGMIGVDGALYKSMEFVGDGLNYLSMDDRFTMANMAIEAGGKNGIFPVDDKTVEYLKEHTKKEWEVYKADEDAEYDEVIEIELNTLRPTVSFPHLPDNTRTIDNVGDIDIDQVVIGSCTNGRISDLRIARDILKGKKVKKGIRCIVIPGTQNIYLQALEEGIIKDLIEAGVVVSTPTCGPCLGGHMGILAKGERCVSTTNRNFVGRMGHVESEVYLASPAVAAASALTGKITDPELV.

Positions 300, 360, and 363 each coordinate [4Fe-4S] cluster.

Belongs to the aconitase/IPM isomerase family. LeuC type 2 subfamily. Heterodimer of LeuC and LeuD. [4Fe-4S] cluster is required as a cofactor.

It carries out the reaction (2R,3S)-3-isopropylmalate = (2S)-2-isopropylmalate. It participates in amino-acid biosynthesis; L-leucine biosynthesis; L-leucine from 3-methyl-2-oxobutanoate: step 2/4. In terms of biological role, catalyzes the isomerization between 2-isopropylmalate and 3-isopropylmalate, via the formation of 2-isopropylmaleate. The chain is 3-isopropylmalate dehydratase large subunit from Clostridium botulinum (strain Eklund 17B / Type B).